The chain runs to 441 residues: GTPase Der (441 aa).

2 consecutive EngA-type G domains span residues 4–168 and 177–352; these read PVVA…PEDI and IRIA…EQNS. GTP-binding positions include 10 to 17, 57 to 61, 121 to 124, 183 to 190, 230 to 234, and 295 to 298; these read GRPNVGKS, DTGGI, NKVE, DTAGM, and NKWD. Residues 353 to 437 form the KH-like domain; it reads TRVATATLNT…PIRMIVRQKD (85 aa).

It belongs to the TRAFAC class TrmE-Era-EngA-EngB-Septin-like GTPase superfamily. EngA (Der) GTPase family. As to quaternary structure, associates with the 50S ribosomal subunit.

Its function is as follows. GTPase that plays an essential role in the late steps of ribosome biogenesis. The protein is GTPase Der of Desulfitobacterium hafniense (strain DSM 10664 / DCB-2).